A 325-amino-acid chain; its full sequence is Small ribosomal subunit biogenesis GTPase RsgA (325 aa).

A CP-type G domain is found at 80–241 (LSKQIHIIAS…IIDTPGIKGF (162 aa)). GTP-binding positions include 129–132 (NKID) and 183–191 (GHSGVGKST). Zn(2+) is bound by residues Cys265, Cys270, His272, and Cys278.

It belongs to the TRAFAC class YlqF/YawG GTPase family. RsgA subfamily. Monomer. Associates with 30S ribosomal subunit, binds 16S rRNA. Zn(2+) serves as cofactor.

It localises to the cytoplasm. In terms of biological role, one of several proteins that assist in the late maturation steps of the functional core of the 30S ribosomal subunit. Helps release RbfA from mature subunits. May play a role in the assembly of ribosomal proteins into the subunit. Circularly permuted GTPase that catalyzes slow GTP hydrolysis, GTPase activity is stimulated by the 30S ribosomal subunit. The protein is Small ribosomal subunit biogenesis GTPase RsgA of Flavobacterium johnsoniae (strain ATCC 17061 / DSM 2064 / JCM 8514 / BCRC 14874 / CCUG 350202 / NBRC 14942 / NCIMB 11054 / UW101) (Cytophaga johnsonae).